The chain runs to 550 residues: Urocanate hydratase (550 aa).

NAD(+)-binding positions include 48–49, Q126, 172–174, E192, R197, 238–239, 259–263, 268–269, and Y317; these read GG, GMG, NA, QTSAH, and YL. C405 is an active-site residue. G487 contacts NAD(+).

Belongs to the urocanase family. NAD(+) serves as cofactor.

The protein resides in the cytoplasm. The enzyme catalyses 4-imidazolone-5-propanoate = trans-urocanate + H2O. It functions in the pathway amino-acid degradation; L-histidine degradation into L-glutamate; N-formimidoyl-L-glutamate from L-histidine: step 2/3. Catalyzes the conversion of urocanate to 4-imidazolone-5-propionate. In Saccharopolyspora erythraea (strain ATCC 11635 / DSM 40517 / JCM 4748 / NBRC 13426 / NCIMB 8594 / NRRL 2338), this protein is Urocanate hydratase.